The primary structure comprises 213 residues: Adenylate kinase (213 aa).

10-15 (GSGKGT) provides a ligand contact to ATP. The interval 30–59 (STGDMLRTTVNKESVLGKNIQAIIKLGNLV) is NMP. AMP is bound by residues T31, R36, 57 to 59 (NLV), 85 to 88 (GFPR), and Q92. The interval 122 to 159 (GRMVHEPSGRIYHVTFNPPKQKGKDDITGENLIIRQDD) is LID. ATP is bound by residues R123 and 132–133 (IY). Positions 156 and 167 each coordinate AMP. Position 199 (C199) interacts with ATP.

The protein belongs to the adenylate kinase family. Monomer.

The protein localises to the cytoplasm. The catalysed reaction is AMP + ATP = 2 ADP. The protein operates within purine metabolism; AMP biosynthesis via salvage pathway; AMP from ADP: step 1/1. In terms of biological role, catalyzes the reversible transfer of the terminal phosphate group between ATP and AMP. Plays an important role in cellular energy homeostasis and in adenine nucleotide metabolism. The sequence is that of Adenylate kinase from Baumannia cicadellinicola subsp. Homalodisca coagulata.